We begin with the raw amino-acid sequence, 136 residues long: Large ribosomal subunit protein uL16 (136 aa).

It belongs to the universal ribosomal protein uL16 family. In terms of assembly, part of the 50S ribosomal subunit.

In terms of biological role, binds 23S rRNA and is also seen to make contacts with the A and possibly P site tRNAs. This chain is Large ribosomal subunit protein uL16, found in Hamiltonella defensa subsp. Acyrthosiphon pisum (strain 5AT).